The following is a 138-amino-acid chain: Large ribosomal subunit protein uL14m (138 aa).

It belongs to the universal ribosomal protein uL14 family. Component of the mitochondrial large ribosomal subunit (mt-LSU). Mature yeast 74S mitochondrial ribosomes consist of a small (37S) and a large (54S) subunit. The 37S small subunit contains a 15S ribosomal RNA (15S mt-rRNA) and 34 different proteins. The 54S large subunit contains a 21S rRNA (21S mt-rRNA) and 46 different proteins.

The protein localises to the mitochondrion. Component of the mitochondrial ribosome (mitoribosome), a dedicated translation machinery responsible for the synthesis of mitochondrial genome-encoded proteins, including at least some of the essential transmembrane subunits of the mitochondrial respiratory chain. The mitoribosomes are attached to the mitochondrial inner membrane and translation products are cotranslationally integrated into the membrane. The protein is Large ribosomal subunit protein uL14m (MRPL38) of Saccharomyces cerevisiae (strain ATCC 204508 / S288c) (Baker's yeast).